The following is a 226-amino-acid chain: MGVEIQSPQEQSSYTVEQLVALNPFNPEILPDLENYVNVTSQTYSLEVNLCLLRLYQFEPERMNTHIVARILVKALMAMPTPDFSLCLFLIPERVQMEEQFKSLIVLSHYLETGRFQQFWDEAAKNRHILEAVPGFEQAIQAYASHLLSLSYQKVPRSVLAEAVNMDGASLDKFIEQQVTNSGWIVEKEGGSIVLPQNEFNHPELKKNTGENVPLEHIARIFPILG.

The PCI domain maps to 44–202 (YSLEVNLCLL…IVLPQNEFNH (159 aa)).

This sequence belongs to the eIF-3 subunit K family. As to quaternary structure, component of the eukaryotic translation initiation factor 3 (eIF-3) complex.

The protein localises to the cytoplasm. In terms of biological role, component of the eukaryotic translation initiation factor 3 (eIF-3) complex, which is involved in protein synthesis of a specialized repertoire of mRNAs and, together with other initiation factors, stimulates binding of mRNA and methionyl-tRNAi to the 40S ribosome. The eIF-3 complex specifically targets and initiates translation of a subset of mRNAs involved in cell proliferation. This Arabidopsis thaliana (Mouse-ear cress) protein is Eukaryotic translation initiation factor 3 subunit K (TIF3K1).